Consider the following 1466-residue polypeptide: ABC transporter G family member 10 (1466 aa).

Residues 23–45 (NTPQYENNNNNNNNTSGNESPNI) show a composition bias toward low complexity. The tract at residues 23 to 47 (NTPQYENNNNNNNNTSGNESPNILN) is disordered. The ABC transporter 1 domain maps to 138 to 392 (VTIFNLFRPS…FLDLGFDCEP (255 aa)). The ABC transmembrane type-2 1 domain maps to 497 to 724 (WGDRFALISK…NGSTMSYQDQ (228 aa)). The next 6 membrane-spanning stretches (helical) occupy residues 501 to 521 (FALI…ASLF), 537 to 557 (AIYA…GLTF), 586 to 606 (IPLT…MYGL), 611 to 631 (GKFF…VAFF), 641 to 661 (LYVS…YGGY), and 767 to 787 (IITF…LELF). The 245-residue stretch at 838-1082 (FTWNHIHYTV…LTSYFERNGV (245 aa)) folds into the ABC transporter 2 domain. 874–881 (GSSGAGKT) is a binding site for ATP. Positions 1177 to 1399 (SYVYGIFTQA…LTCKEYFKPT (223 aa)) constitute an ABC transmembrane type-2 2 domain. 6 helical membrane-spanning segments follow: residues 1178–1198 (YVYG…FTFW), 1214–1234 (IFEI…QFLI), 1253–1273 (FAIS…TICF), 1290–1310 (FYFY…GQVV), 1319–1339 (LAQT…GVLV), and 1440–1460 (YGIL…FVYL).

It belongs to the ABC transporter superfamily. ABCG family. PDR (TC 3.A.1.205) subfamily.

Its subcellular location is the membrane. The protein is ABC transporter G family member 10 (abcG10) of Dictyostelium discoideum (Social amoeba).